The chain runs to 517 residues: Zinc finger protein 215 (517 aa).

The 79-residue stretch at 48–126 (RQKFRHFQYL…EDMVTLIEDV (79 aa)) folds into the SCAN box domain. One can recognise a KRAB domain in the interval 164 to 237 (VTFKDVVVEF…EKEIPRKTIF (74 aa)). C2H2-type zinc fingers lie at residues 379–401 (YECY…QIIH), 407–429 (YKCS…QKLH), 462–484 (YECV…QMIH), and 490–512 (FKCK…QKLH).

It belongs to the krueppel C2H2-type zinc-finger protein family.

It localises to the nucleus. Functionally, may be involved in transcriptional regulation. In Pongo abelii (Sumatran orangutan), this protein is Zinc finger protein 215 (ZNF215).